Consider the following 482-residue polypeptide: Cobyric acid synthase (482 aa).

Residues 249–436 (QCKIACLALS…LHGLFTSDDF (188 aa)) enclose the GATase cobBQ-type domain. Cysteine 331 acts as the Nucleophile in catalysis. Histidine 428 is a catalytic residue.

Belongs to the CobB/CobQ family. CobQ subfamily.

It participates in cofactor biosynthesis; adenosylcobalamin biosynthesis. Its function is as follows. Catalyzes amidations at positions B, D, E, and G on adenosylcobyrinic A,C-diamide. NH(2) groups are provided by glutamine, and one molecule of ATP is hydrogenolyzed for each amidation. The protein is Cobyric acid synthase of Bradyrhizobium diazoefficiens (strain JCM 10833 / BCRC 13528 / IAM 13628 / NBRC 14792 / USDA 110).